The primary structure comprises 692 residues: Putative ESX-1 scaffolding and assembly protein SaeA (692 aa).

Over residues 1–21 (MGERGELVSDLHPSDDHDADP) the composition is skewed to basic and acidic residues. Disordered regions lie at residues 1 to 23 (MGER…DPRL) and 87 to 134 (PAAP…TTGF). Positions 89-107 (APEPDPPPVPEPQPEPEPG) are enriched in pro residues.

It is found in the cytoplasm. Its function is as follows. May be involved in assembly of the ESX-1 / type VII specialized secretion system (T7SS), which exports several proteins including EsxA and EsxB. Involved in DNA conjugation in recipient (MKD8) but not donor (mc(2)155) strain. In Mycolicibacterium smegmatis (strain ATCC 700084 / mc(2)155) (Mycobacterium smegmatis), this protein is Putative ESX-1 scaffolding and assembly protein SaeA.